The chain runs to 215 residues: Enolase-phosphatase E1 (215 aa).

Mg(2+) is bound by residues aspartate 11 and glutamate 13. Substrate contacts are provided by residues 117–118 (SS) and lysine 151. Aspartate 174 contacts Mg(2+).

Belongs to the HAD-like hydrolase superfamily. MasA/MtnC family. As to quaternary structure, monomer. Requires Mg(2+) as cofactor.

It is found in the cytoplasm. Its subcellular location is the nucleus. It carries out the reaction 5-methylsulfanyl-2,3-dioxopentyl phosphate + H2O = 1,2-dihydroxy-5-(methylsulfanyl)pent-1-en-3-one + phosphate. Its pathway is amino-acid biosynthesis; L-methionine biosynthesis via salvage pathway; L-methionine from S-methyl-5-thio-alpha-D-ribose 1-phosphate: step 3/6. The protein operates within amino-acid biosynthesis; L-methionine biosynthesis via salvage pathway; L-methionine from S-methyl-5-thio-alpha-D-ribose 1-phosphate: step 4/6. Functionally, bifunctional enzyme that catalyzes the enolization of 2,3-diketo-5-methylthiopentyl-1-phosphate (DK-MTP-1-P) into the intermediate 2-hydroxy-3-keto-5-methylthiopentenyl-1-phosphate (HK-MTPenyl-1-P), which is then dephosphorylated to form the acireductone 1,2-dihydroxy-3-keto-5-methylthiopentene (DHK-MTPene). In Schizosaccharomyces japonicus (strain yFS275 / FY16936) (Fission yeast), this protein is Enolase-phosphatase E1 (utr4).